Here is a 578-residue protein sequence, read N- to C-terminus: Oxygen sensor histidine kinase response regulator DevS/DosS (578 aa).

2 consecutive GAF domains span residues 63–200 (DLEA…GIAV) and 231–369 (EPAT…ALAW). His-149 contributes to the heme binding site. The region spanning 383–578 (VLTDRDRIAR…VLRWSAPLSQ (196 aa)) is the Histidine kinase domain. Phosphohistidine; by autocatalysis is present on His-395.

The cofactor is Mg(2+). Heme serves as cofactor.

It is found in the cytoplasm. It carries out the reaction ATP + protein L-histidine = ADP + protein N-phospho-L-histidine.. Functionally, member of the two-component regulatory system DevR/DevS (DosR/DosS) involved in onset of the dormancy response. Regulates an approximately 48-member regulon. Required for full induction of the DevR (DosR) regulon; acts later than DosT to positively regulate expression of the DevR regulon during adaptation to anaerobiosis. Characterized as an oxygen sensor; O(2) acts as a switch, with O(2)-bound Fe(2+) protein inactive in autophosphorylation. Has also been suggested to act as a redox sensor, or perhaps as a dual oxygen/redox sensor. Donates a phosphate group to transcriptional regulator DevR (DosR). The protein is Oxygen sensor histidine kinase response regulator DevS/DosS (devS) of Mycobacterium tuberculosis (strain CDC 1551 / Oshkosh).